The primary structure comprises 141 residues: Hemoglobin subunit alpha-A (141 aa).

Residues Val1 to Arg141 form the Globin domain. O2 is bound at residue His58. A heme b-binding site is contributed by His87.

Belongs to the globin family. Heterotetramer of two alpha chains and two beta chains. As to expression, red blood cells.

Functionally, involved in oxygen transport from the lung to the various peripheral tissues. The chain is Hemoglobin subunit alpha-A (HBAA) from Rhea americana (Greater rhea).